The chain runs to 338 residues: 3 beta-hydroxysteroid dehydrogenase type 7 (338 aa).

The active-site Proton acceptor is the Tyr159. Lys163 contacts NAD(+). 2 helical membrane-spanning segments follow: residues 258 to 278 (LLPYWLLVLLTALNALLQWLL) and 280 to 300 (PLVLYTPLLNPYTLAVANTTF).

Belongs to the 3-beta-HSD family. In terms of tissue distribution, high levels in liver and lung, moderate levels in spleen, brain, heart, kidney, jejunum and testis. Up-regulated in 3Y1 cells upon growth arrest.

Its subcellular location is the endoplasmic reticulum membrane. The enzyme catalyses 7alpha-hydroxycholesterol + NAD(+) = 7alpha-hydroxycholest-4-en-3-one + NADH + H(+). The catalysed reaction is 7alpha,25-dihydroxycholesterol + NAD(+) = 7alpha,25-dihydroxy-4-cholesten-3-one + NADH + H(+). It catalyses the reaction (25R)-cholest-5-en-3beta,7alpha,26-triol + NAD(+) = (25R)-7alpha,26-dihydroxycholest-4-en-3-one + NADH + H(+). It carries out the reaction (24S)-7alpha-dihydroxycholesterol + NAD(+) = (24S)-7alpha,24-dihydroxycholest-4-en-3-one + NADH + H(+). It participates in lipid metabolism; steroid biosynthesis. The 3-beta-HSD enzymatic system plays a crucial role in the biosynthesis of all classes of hormonal steroids. HSD VII is active against four 7-alpha-hydroxylated sterols. Does not metabolize several different C(19/21) steroids as substrates. Involved in bile acid synthesis. Plays a key role in cell positioning and movement in lymphoid tissues by mediating degradation of 7-alpha,25-dihydroxycholesterol (7-alpha,25-OHC): 7-alpha,25-OHC acts as a ligand for the G protein-coupled receptor GPR183/EBI2, a chemotactic receptor for a number of lymphoid cells. The polypeptide is 3 beta-hydroxysteroid dehydrogenase type 7 (Rattus norvegicus (Rat)).